A 338-amino-acid polypeptide reads, in one-letter code: Biotin synthase (338 aa).

Positions 63-290 constitute a Radical SAM core domain; that stretch reads NGVQLSTLLS…RAKVRLSAGR (228 aa). The [4Fe-4S] cluster site is built by Cys78, Cys82, and Cys85. Cys122, Cys153, Cys213, and Arg285 together coordinate [2Fe-2S] cluster.

This sequence belongs to the radical SAM superfamily. Biotin synthase family. Homodimer. [4Fe-4S] cluster is required as a cofactor. The cofactor is [2Fe-2S] cluster.

It catalyses the reaction (4R,5S)-dethiobiotin + (sulfur carrier)-SH + 2 reduced [2Fe-2S]-[ferredoxin] + 2 S-adenosyl-L-methionine = (sulfur carrier)-H + biotin + 2 5'-deoxyadenosine + 2 L-methionine + 2 oxidized [2Fe-2S]-[ferredoxin]. The protein operates within cofactor biosynthesis; biotin biosynthesis; biotin from 7,8-diaminononanoate: step 2/2. In terms of biological role, catalyzes the conversion of dethiobiotin (DTB) to biotin by the insertion of a sulfur atom into dethiobiotin via a radical-based mechanism. The sequence is that of Biotin synthase from Nitrosomonas eutropha (strain DSM 101675 / C91 / Nm57).